Here is a 154-residue protein sequence, read N- to C-terminus: Ribonuclease H (154 aa).

The 141-residue stretch at 1–141 folds into the RNase H type-1 domain; it reads MKRIEAYTDG…ADELARAGME (141 aa). 4 residues coordinate Mg(2+): aspartate 9, glutamate 47, aspartate 69, and aspartate 133.

The protein belongs to the RNase H family. As to quaternary structure, monomer. Requires Mg(2+) as cofactor.

Its subcellular location is the cytoplasm. It catalyses the reaction Endonucleolytic cleavage to 5'-phosphomonoester.. Its function is as follows. Endonuclease that specifically degrades the RNA of RNA-DNA hybrids. The sequence is that of Ribonuclease H from Brucella abortus (strain 2308).